A 320-amino-acid chain; its full sequence is Malate dehydrogenase (320 aa).

NAD(+) contacts are provided by residues 10–15 and D34; that span reads GSGMIG. R83 and R89 together coordinate substrate. NAD(+)-binding positions include N96 and 119–121; that span reads ITN. Substrate is bound by residues N121 and R152. H176 functions as the Proton acceptor in the catalytic mechanism.

This sequence belongs to the LDH/MDH superfamily. MDH type 3 family.

The enzyme catalyses (S)-malate + NAD(+) = oxaloacetate + NADH + H(+). Its function is as follows. Catalyzes the reversible oxidation of malate to oxaloacetate. The chain is Malate dehydrogenase from Brucella melitensis biotype 1 (strain ATCC 23456 / CCUG 17765 / NCTC 10094 / 16M).